We begin with the raw amino-acid sequence, 545 residues long: Labda-7,13-dienyl diphosphate synthase (545 aa).

Positions 315 to 320 (DADDTA) match the DXDDTA motif motif. Positions 444 to 450 (RRTDGSW) match the RXXDGSW motif motif. Residues 526–545 (LPAPAPVPPGFDAARTGPAD) are disordered.

This sequence belongs to the terpene synthase family. Mg(2+) serves as cofactor.

It catalyses the reaction (2E,6E,10E)-geranylgeranyl diphosphate = (13E)-labda-7,13-dien-15-yl diphosphate. Its function is as follows. Involved in the biosynthesis of the labdane-type bicyclic diterpene labda-7,13(16),14-triene. Catalyzes the conversion of geranylgeranyl diphosphate (GGDP) into labda-7,13(E)-dienyl diphosphate. The sequence is that of Labda-7,13-dienyl diphosphate synthase from Streptomyces clavuligerus.